Reading from the N-terminus, the 273-residue chain is NAD kinase (273 aa).

Asp53 (proton acceptor) is an active-site residue. Residues 53–54, Arg58, 128–129, Asp157, 168–173, and Ala192 each bind NAD(+); these read DG, NE, and TAYNFS.

The protein belongs to the NAD kinase family. A divalent metal cation is required as a cofactor.

The protein resides in the cytoplasm. It carries out the reaction NAD(+) + ATP = ADP + NADP(+) + H(+). In terms of biological role, involved in the regulation of the intracellular balance of NAD and NADP, and is a key enzyme in the biosynthesis of NADP. Catalyzes specifically the phosphorylation on 2'-hydroxyl of the adenosine moiety of NAD to yield NADP. The protein is NAD kinase of Finegoldia magna (strain ATCC 29328 / DSM 20472 / WAL 2508) (Peptostreptococcus magnus).